Reading from the N-terminus, the 481-residue chain is Anti-sigma-I factor RsgI5 (481 aa).

Residues 1 to 50 are Cytoplasmic-facing; it reads MKHKGIVLKLTKSKAIISTNDFQCYYIKRSPTIYVGKEVEFTNKDIVTKK. Residues 3-50 enclose the RsgI N-terminal anti-sigma domain; the sequence is HKGIVLKLTKSKAIISTNDFQCYYIKRSPTIYVGKEVEFTNKDIVTKK. A helical membrane pass occupies residues 51–71; sequence SVLIKPALSVACFILLIACVL. The Extracellular portion of the chain corresponds to 72-481; that stretch reads SLSKIINNIS…DATFIGIKVD (410 aa). The interval 255 to 339 is disordered; the sequence is ASEERNPEES…TPTPTPTPAD (85 aa). Over residues 256-265 the composition is skewed to basic and acidic residues; the sequence is SEERNPEESP. Low complexity-rich tracts occupy residues 266–283 and 291–315; these read KMTP…TPTD and NTPT…TSTP. A compositionally biased stretch (pro residues) spans 316–336; sequence APKPTSTPTPTLMPTPTPTPT.

In terms of assembly, interacts (via RsgI N-terminal anti-sigma domain) with SigI5.

The protein localises to the cell membrane. Anti-sigma factor for SigI5. Negatively regulates SigI5 activity through direct interaction. Binding of the polysaccharide substrate to the extracellular C-terminal sensing domain of RsgI5 may induce a conformational change in its N-terminal cytoplasmic region, leading to the release and activation of SigI5. The polypeptide is Anti-sigma-I factor RsgI5 (Acetivibrio thermocellus (strain ATCC 27405 / DSM 1237 / JCM 9322 / NBRC 103400 / NCIMB 10682 / NRRL B-4536 / VPI 7372) (Clostridium thermocellum)).